Consider the following 521-residue polypeptide: AAA ATPase forming ring-shaped complexes (521 aa).

Residues 4–44 are a coiled coil; it reads TEDLAALNDRLMAKNHALAEALSRAGKELTKAKSQLAQLAQ. Residue 235–240 coordinates ATP; that stretch reads GNGKTM.

It belongs to the AAA ATPase family. Homohexamer. Assembles into a hexameric ring structure.

The polypeptide is AAA ATPase forming ring-shaped complexes (Bifidobacterium longum (strain NCC 2705)).